A 99-amino-acid chain; its full sequence is MASAKPKKKNPRLASGRKRARQDVKLNAANTSLRSKYRTAVKNVEKAVLAGDKTKASELFAKMQSVVDTIADKGIFHKNKAARDKSRLSAKVKALALAA.

Residues 1–20 (MASAKPKKKNPRLASGRKRA) show a composition bias toward basic residues. The interval 1-29 (MASAKPKKKNPRLASGRKRARQDVKLNAA) is disordered.

The protein belongs to the bacterial ribosomal protein bS20 family.

Binds directly to 16S ribosomal RNA. This is Small ribosomal subunit protein bS20 from Paracidovorax citrulli (strain AAC00-1) (Acidovorax citrulli).